Consider the following 553-residue polypeptide: Membrane protein insertase YidC (553 aa).

The next 5 helical transmembrane spans lie at 7–24 (VLWV…DNWQ), 365–385 (WGWA…PLSA), 435–455 (LPVV…LASV), 474–494 (PFFI…SLNP), and 509–529 (PIAF…YYVV).

This sequence belongs to the OXA1/ALB3/YidC family. Type 1 subfamily. Interacts with the Sec translocase complex via SecD. Specifically interacts with transmembrane segments of nascent integral membrane proteins during membrane integration.

It is found in the cell inner membrane. In terms of biological role, required for the insertion and/or proper folding and/or complex formation of integral membrane proteins into the membrane. Involved in integration of membrane proteins that insert both dependently and independently of the Sec translocase complex, as well as at least some lipoproteins. Aids folding of multispanning membrane proteins. The polypeptide is Membrane protein insertase YidC (Burkholderia orbicola (strain MC0-3)).